The sequence spans 571 residues: Proline--tRNA ligase (571 aa).

It belongs to the class-II aminoacyl-tRNA synthetase family. ProS type 1 subfamily. Homodimer.

The protein localises to the cytoplasm. It catalyses the reaction tRNA(Pro) + L-proline + ATP = L-prolyl-tRNA(Pro) + AMP + diphosphate. Functionally, catalyzes the attachment of proline to tRNA(Pro) in a two-step reaction: proline is first activated by ATP to form Pro-AMP and then transferred to the acceptor end of tRNA(Pro). As ProRS can inadvertently accommodate and process non-cognate amino acids such as alanine and cysteine, to avoid such errors it has two additional distinct editing activities against alanine. One activity is designated as 'pretransfer' editing and involves the tRNA(Pro)-independent hydrolysis of activated Ala-AMP. The other activity is designated 'posttransfer' editing and involves deacylation of mischarged Ala-tRNA(Pro). The misacylated Cys-tRNA(Pro) is not edited by ProRS. The sequence is that of Proline--tRNA ligase from Pseudomonas paraeruginosa (strain DSM 24068 / PA7) (Pseudomonas aeruginosa (strain PA7)).